The sequence spans 471 residues: Thymidine phosphorylase (471 aa).

The segment covering 1 to 10 has biased composition (pro residues); sequence MAAPGTPPPS. The disordered stretch occupies residues 1 to 21; it reads MAAPGTPPPSASGGGGGEPRQ. The residue at position 6 (Thr-6) is a Phosphothreonine. Substrate is bound by residues His-102, Arg-188, Ser-203, and Lys-207.

It belongs to the thymidine/pyrimidine-nucleoside phosphorylase family. In terms of assembly, homodimer.

The catalysed reaction is thymidine + phosphate = 2-deoxy-alpha-D-ribose 1-phosphate + thymine. It participates in pyrimidine metabolism; dTMP biosynthesis via salvage pathway; dTMP from thymine: step 1/2. Catalyzes the reversible phosphorolysis of thymidine. The produced molecules are then utilized as carbon and energy sources or in the rescue of pyrimidine bases for nucleotide synthesis. This is Thymidine phosphorylase (Tymp) from Mus musculus (Mouse).